Reading from the N-terminus, the 312-residue chain is Malate dehydrogenase (312 aa).

Residues 7-13 (GAAGGIG) and Asp34 each bind NAD(+). The substrate site is built by Arg81 and Arg87. NAD(+) contacts are provided by residues Asn94 and 117–119 (ITN). Substrate-binding residues include Asn119 and Arg153. His177 (proton acceptor) is an active-site residue. Met227 is a binding site for NAD(+).

Belongs to the LDH/MDH superfamily. MDH type 1 family. As to quaternary structure, homodimer.

The catalysed reaction is (S)-malate + NAD(+) = oxaloacetate + NADH + H(+). Functionally, catalyzes the reversible oxidation of malate to oxaloacetate. The chain is Malate dehydrogenase from Escherichia coli (strain 55989 / EAEC).